Here is a 165-residue protein sequence, read N- to C-terminus: Small ribosomal subunit protein uS5 (165 aa).

The 64-residue stretch at 10-73 (QIEKLISLNR…TSARKNLRFV (64 aa)) folds into the S5 DRBM domain.

The protein belongs to the universal ribosomal protein uS5 family. Part of the 30S ribosomal subunit. Contacts proteins S4 and S8.

Functionally, with S4 and S12 plays an important role in translational accuracy. Its function is as follows. Located at the back of the 30S subunit body where it stabilizes the conformation of the head with respect to the body. The chain is Small ribosomal subunit protein uS5 from Borreliella burgdorferi (strain ATCC 35210 / DSM 4680 / CIP 102532 / B31) (Borrelia burgdorferi).